The sequence spans 492 residues: N-succinylglutamate 5-semialdehyde dehydrogenase (492 aa).

220–225 provides a ligand contact to NAD(+); it reads GSANTG. Residues glutamate 243 and cysteine 277 contribute to the active site.

It belongs to the aldehyde dehydrogenase family. AstD subfamily.

The catalysed reaction is N-succinyl-L-glutamate 5-semialdehyde + NAD(+) + H2O = N-succinyl-L-glutamate + NADH + 2 H(+). Its pathway is amino-acid degradation; L-arginine degradation via AST pathway; L-glutamate and succinate from L-arginine: step 4/5. In terms of biological role, catalyzes the NAD-dependent reduction of succinylglutamate semialdehyde into succinylglutamate. This chain is N-succinylglutamate 5-semialdehyde dehydrogenase, found in Escherichia coli O9:H4 (strain HS).